The chain runs to 670 residues: MTSERKMLVTSALPYANGHLHLGHLVEHIQTDIWVRTHKMLGIQCISVCGDDAHGTPIMLKAEQLGITPEALTAEIKLSHEKDFKAFAIDYDYYHTTHSPENQALATTIFERLQAGGDIVKKTIRQFYDPVKQMFLPDRYVKGTCPKCAAVDQYGDNCEVCGATYSPTDLINPVSVISGVSPVEKESEHYFFDLPRYEELLKDWTRKGHLQTEVTNKLSEWFEAGLKQWDISRDAPYFGFPIPGVPDKYFYVWLDAPIGYMASFKKYCDERGVSFDEFWDKASKTELYHFVGKDIVYFHALFWPAMLAASGFRTPTAVYTHGFLTVEGQKMSKSRGTFIEARAYLAHLHPEYLRYYFAAKLNGRVDDLDLNFDDFVNRVNADLVGKVVNIASRCAGFINKRFDNRLSSELNDQKLYNDLLSARESVIDAFVSRDYARAIRQIMDCADKVNQYIDANKPWVLAKDESKLNEVHAICTMGINLFRILITYLKPVLPMMAKASEEFLNSEPLHWDSIDKPLLNHRINTFKPLMVRVEKEKIEAMLVQSKESLMTTPVKENTPVEDANLISIEDFAKVDLRIAKIVNAEPVEGADKLMRLILDLGDAQKQVFAGIKKAYDAEELIGRLTVMVANLEPRTMRFGVSEGMVLAAGDGQGIYLLQPDAGALPGMKVK.

Positions 14-24 (PYANGHLHLGH) match the 'HIGH' region motif. Zn(2+)-binding residues include Cys-145, Cys-148, Cys-158, and Cys-161. A 'KMSKS' region motif is present at residues 330–334 (KMSKS). Lys-333 contributes to the ATP binding site. The 101-residue stretch at 570–670 (DFAKVDLRIA…AGALPGMKVK (101 aa)) folds into the tRNA-binding domain.

Belongs to the class-I aminoacyl-tRNA synthetase family. MetG type 1 subfamily. As to quaternary structure, homodimer. Zn(2+) is required as a cofactor.

It is found in the cytoplasm. The enzyme catalyses tRNA(Met) + L-methionine + ATP = L-methionyl-tRNA(Met) + AMP + diphosphate. In terms of biological role, is required not only for elongation of protein synthesis but also for the initiation of all mRNA translation through initiator tRNA(fMet) aminoacylation. This is Methionine--tRNA ligase from Legionella pneumophila subsp. pneumophila (strain Philadelphia 1 / ATCC 33152 / DSM 7513).